A 274-amino-acid polypeptide reads, in one-letter code: Proteasome subunit beta (274 aa).

Positions 1-52 (MADPLGAAGRLPAVFMTPGTSSFADFLSRSAPHLLPGARSGLPGPVTEVAHG) are cleaved as a propeptide — removed in mature form; by autocatalysis. Catalysis depends on Thr53, which acts as the Nucleophile.

This sequence belongs to the peptidase T1B family. As to quaternary structure, the 20S proteasome core is composed of 14 alpha and 14 beta subunits that assemble into four stacked heptameric rings, resulting in a barrel-shaped structure. The two inner rings, each composed of seven catalytic beta subunits, are sandwiched by two outer rings, each composed of seven alpha subunits. The catalytic chamber with the active sites is on the inside of the barrel. Has a gated structure, the ends of the cylinder being occluded by the N-termini of the alpha-subunits. Is capped by the proteasome-associated ATPase, ARC.

The protein resides in the cytoplasm. The enzyme catalyses Cleavage of peptide bonds with very broad specificity.. It participates in protein degradation; proteasomal Pup-dependent pathway. Its activity is regulated as follows. The formation of the proteasomal ATPase ARC-20S proteasome complex, likely via the docking of the C-termini of ARC into the intersubunit pockets in the alpha-rings, may trigger opening of the gate for substrate entry. Interconversion between the open-gate and close-gate conformations leads to a dynamic regulation of the 20S proteasome proteolysis activity. In terms of biological role, component of the proteasome core, a large protease complex with broad specificity involved in protein degradation. The protein is Proteasome subunit beta of Frankia casuarinae (strain DSM 45818 / CECT 9043 / HFP020203 / CcI3).